Reading from the N-terminus, the 324-residue chain is Dolichyl-phosphate beta-glucosyltransferase (324 aa).

Residues 1–7 are Lumenal-facing; the sequence is MAPLLLQ. Residues 8–28 traverse the membrane as a helical; Signal-anchor for type II membrane protein segment; the sequence is LAVLGAALAAAALVLISIVAF. The Cytoplasmic segment spans residues 29-324; it reads TTATKMPALH…WRLEQTRKMN (296 aa).

It belongs to the glycosyltransferase 2 family. Expressed in pancreas, placenta, liver, heart, brain, kidney, skeletal muscle, and lung.

It localises to the endoplasmic reticulum membrane. It catalyses the reaction a di-trans,poly-cis-dolichyl phosphate + UDP-alpha-D-glucose = a di-trans,poly-cis-dolichyl beta-D-glucosyl phosphate + UDP. It functions in the pathway protein modification; protein glycosylation. In terms of biological role, dolichyl-phosphate beta-glucosyltransferase that operates in the biosynthetic pathway of dolichol-linked oligosaccharides, the glycan precursors employed in protein asparagine (N)-glycosylation. The assembly of dolichol-linked oligosaccharides begins on the cytosolic side of the endoplasmic reticulum membrane and finishes in its lumen. The sequential addition of sugars to dolichol pyrophosphate produces dolichol-linked oligosaccharides containing fourteen sugars, including two GlcNAcs, nine mannoses and three glucoses. Once assembled, the oligosaccharide is transferred from the lipid to nascent proteins by oligosaccharyltransferases. Dolichyl-phosphate beta-glucosyltransferase produces dolichyl beta-D-glucosyl phosphate/Dol-P-Glc, the glucose donor substrate used sequentially by ALG6, ALG8 and ALG10 to add glucose residues on top of the Man(9)GlcNAc(2)-PP-Dol structure. These are the three last steps in the biosynthetic pathway of dolichol-linked oligosaccharides to produce Glc(3)Man(9)GlcNAc(2)-PP-Dol. The enzyme is most probably active on the cytoplasmic side of the endoplasmic reticulum while its product Dol-P-Glc is the substrate for ALG6, ALG8 and ALG11 in the lumen of the endoplasmic reticulum. The polypeptide is Dolichyl-phosphate beta-glucosyltransferase (Homo sapiens (Human)).